A 476-amino-acid chain; its full sequence is Glutamate mutase epsilon subunit (476 aa).

R62 contacts L-glutamate. G64 is a binding site for adenosylcob(III)alamin. An L-glutamate-binding site is contributed by R96. An adenosylcob(III)alamin-binding site is contributed by N119. Residues 145–146 (RH), E167, and Y173 contribute to the L-glutamate site. P176 serves as a coordination point for adenosylcob(III)alamin. Y177 contributes to the L-glutamate binding site. 3 residues coordinate adenosylcob(III)alamin: F289, K318, and E322.

This sequence belongs to the methylaspartate mutase GlmE subunit family. In terms of assembly, heterotetramer composed of 2 epsilon subunits (GlmE) and 2 sigma subunits (GlmS). GlmE exists as a homodimer and GlmS as a monomer. Adenosylcob(III)alamin serves as cofactor.

It catalyses the reaction (2S,3S)-3-methyl-L-aspartate = L-glutamate. It functions in the pathway amino-acid degradation; L-glutamate degradation via mesaconate pathway; acetate and pyruvate from L-glutamate: step 1/4. Catalyzes the carbon skeleton rearrangement of L-glutamate to L-threo-3-methylaspartate ((2S,3S)-3-methylaspartate). The sequence is that of Glutamate mutase epsilon subunit from Halobacterium salinarum (strain ATCC 700922 / JCM 11081 / NRC-1) (Halobacterium halobium).